The primary structure comprises 338 residues: Eukaryotic translation initiation factor 3 subunit H (338 aa).

The MPN domain maps to Val22 to Ala154.

It belongs to the eIF-3 subunit H family. As to quaternary structure, component of the eukaryotic translation initiation factor 3 (eIF-3) complex. The eIF-3 complex interacts with pix. Interacts with mxt.

The protein resides in the cytoplasm. Functionally, component of the eukaryotic translation initiation factor 3 (eIF-3) complex, which is involved in protein synthesis of a specialized repertoire of mRNAs and, together with other initiation factors, stimulates binding of mRNA and methionyl-tRNAi to the 40S ribosome. The eIF-3 complex specifically targets and initiates translation of a subset of mRNAs involved in cell proliferation. The sequence is that of Eukaryotic translation initiation factor 3 subunit H from Drosophila erecta (Fruit fly).